The primary structure comprises 194 residues: Peptidyl-tRNA hydrolase (194 aa).

Tyrosine 17 provides a ligand contact to tRNA. Histidine 22 serves as the catalytic Proton acceptor. Residues phenylalanine 68, asparagine 70, and asparagine 116 each contribute to the tRNA site.

This sequence belongs to the PTH family. As to quaternary structure, monomer.

The protein localises to the cytoplasm. It carries out the reaction an N-acyl-L-alpha-aminoacyl-tRNA + H2O = an N-acyl-L-amino acid + a tRNA + H(+). Functionally, hydrolyzes ribosome-free peptidyl-tRNAs (with 1 or more amino acids incorporated), which drop off the ribosome during protein synthesis, or as a result of ribosome stalling. Its function is as follows. Catalyzes the release of premature peptidyl moieties from peptidyl-tRNA molecules trapped in stalled 50S ribosomal subunits, and thus maintains levels of free tRNAs and 50S ribosomes. The protein is Peptidyl-tRNA hydrolase of Haemophilus influenzae (strain ATCC 51907 / DSM 11121 / KW20 / Rd).